The following is a 495-amino-acid chain: Glycogen synthase (495 aa).

Lysine 24 serves as a coordination point for ADP-alpha-D-glucose.

This sequence belongs to the glycosyltransferase 1 family. Bacterial/plant glycogen synthase subfamily.

It carries out the reaction [(1-&gt;4)-alpha-D-glucosyl](n) + ADP-alpha-D-glucose = [(1-&gt;4)-alpha-D-glucosyl](n+1) + ADP + H(+). Its pathway is glycan biosynthesis; glycogen biosynthesis. Synthesizes alpha-1,4-glucan chains using ADP-glucose. This Nitrosomonas europaea (strain ATCC 19718 / CIP 103999 / KCTC 2705 / NBRC 14298) protein is Glycogen synthase.